A 147-amino-acid chain; its full sequence is Protein-export protein SecB (147 aa).

This sequence belongs to the SecB family. As to quaternary structure, homotetramer, a dimer of dimers. One homotetramer interacts with 1 SecA dimer.

It localises to the cytoplasm. Its function is as follows. One of the proteins required for the normal export of preproteins out of the cell cytoplasm. It is a molecular chaperone that binds to a subset of precursor proteins, maintaining them in a translocation-competent state. It also specifically binds to its receptor SecA. In Neisseria meningitidis serogroup C (strain 053442), this protein is Protein-export protein SecB.